The primary structure comprises 301 residues: GTPase Era (301 aa).

In terms of domain architecture, Era-type G spans 7–175 (YCGFIAIVGR…AAIVRKHLPE (169 aa)). Residues 15–22 (GRPNVGKS) are G1. A GTP-binding site is contributed by 15-22 (GRPNVGKS). Positions 41–45 (QTTRH) are G2. Residues 62 to 65 (DTPG) are G3. GTP is bound by residues 62–66 (DTPGL) and 124–127 (NKVD). Residues 124 to 127 (NKVD) form a G4 region. The interval 154-156 (ISA) is G5. Residues 206 to 283 (LGAELPYSVT…HLELWVKVKS (78 aa)) enclose the KH type-2 domain.

Belongs to the TRAFAC class TrmE-Era-EngA-EngB-Septin-like GTPase superfamily. Era GTPase family. Monomer.

It localises to the cytoplasm. It is found in the cell inner membrane. In terms of biological role, an essential GTPase that binds both GDP and GTP, with rapid nucleotide exchange. Plays a role in 16S rRNA processing and 30S ribosomal subunit biogenesis and possibly also in cell cycle regulation and energy metabolism. This is GTPase Era from Escherichia fergusonii (strain ATCC 35469 / DSM 13698 / CCUG 18766 / IAM 14443 / JCM 21226 / LMG 7866 / NBRC 102419 / NCTC 12128 / CDC 0568-73).